The chain runs to 360 residues: MPTILVSALEASSNMHLEELHRNLPEDYRFIGVFEGKNALYSPREFSIMGFRDVIGRLGFLLKAHKEMVQLAKQADMVLLMDSSSFNIPLAKKIKKQDPHKKIMYYILPQVWAWKKWRAKSLEKYCDFLGAILPFEVGYYQKKAQYVGHPLLDEIKYYKKDIKGETLVFMPGSRKSEIAKMFPLFVKVAQILEQNEGFKRRVLVVPSFFKGLDLKALYGEDIQLFEISYDAHKSLFEAEFAFICSGTATLEAALIGTPFVLAYRAKTMDFLIARMLVNLHYIGLANIFYNALNDETPGLGESQLHPELIQHFLSVEGLLKAYEEMDRERYFKESLRLREYLKHGSARKIANEMAFLLNLT.

Belongs to the LpxB family.

It catalyses the reaction a lipid X + a UDP-2-N,3-O-bis[(3R)-3-hydroxyacyl]-alpha-D-glucosamine = a lipid A disaccharide + UDP + H(+). It participates in bacterial outer membrane biogenesis; LPS lipid A biosynthesis. In terms of biological role, condensation of UDP-2,3-diacylglucosamine and 2,3-diacylglucosamine-1-phosphate to form lipid A disaccharide, a precursor of lipid A, a phosphorylated glycolipid that anchors the lipopolysaccharide to the outer membrane of the cell. The sequence is that of Lipid-A-disaccharide synthase from Helicobacter pylori (strain G27).